Consider the following 128-residue polypeptide: Fluoride-specific ion channel FluC (128 aa).

Helical transmembrane passes span 4-24, 35-55, 67-87, and 99-119; these read VFLL…VSTW, FGIL…WSIA, FLFT…LDTM, and LLNV…GIIL. Positions 74 and 77 each coordinate Na(+).

Belongs to the fluoride channel Fluc/FEX (TC 1.A.43) family.

It is found in the cell inner membrane. The enzyme catalyses fluoride(in) = fluoride(out). Na(+) is not transported, but it plays an essential structural role and its presence is essential for fluoride channel function. In terms of biological role, fluoride-specific ion channel. Important for reducing fluoride concentration in the cell, thus reducing its toxicity. The sequence is that of Fluoride-specific ion channel FluC from Parabacteroides distasonis (strain ATCC 8503 / DSM 20701 / CIP 104284 / JCM 5825 / NCTC 11152).